The primary structure comprises 250 residues: 5-oxoprolinase subunit A (250 aa).

Belongs to the LamB/PxpA family. As to quaternary structure, forms a complex composed of PxpA, PxpB and PxpC.

The enzyme catalyses 5-oxo-L-proline + ATP + 2 H2O = L-glutamate + ADP + phosphate + H(+). Functionally, catalyzes the cleavage of 5-oxoproline to form L-glutamate coupled to the hydrolysis of ATP to ADP and inorganic phosphate. In Thermus thermophilus (strain ATCC 27634 / DSM 579 / HB8), this protein is 5-oxoprolinase subunit A.